The following is a 159-amino-acid chain: Ribosomal RNA large subunit methyltransferase H (159 aa).

Residues Leu-76, Gly-108, and Phe-127 to Phe-132 contribute to the S-adenosyl-L-methionine site.

Belongs to the RNA methyltransferase RlmH family. As to quaternary structure, homodimer.

It localises to the cytoplasm. It carries out the reaction pseudouridine(1915) in 23S rRNA + S-adenosyl-L-methionine = N(3)-methylpseudouridine(1915) in 23S rRNA + S-adenosyl-L-homocysteine + H(+). Specifically methylates the pseudouridine at position 1915 (m3Psi1915) in 23S rRNA. The chain is Ribosomal RNA large subunit methyltransferase H from Bacillus velezensis (strain DSM 23117 / BGSC 10A6 / LMG 26770 / FZB42) (Bacillus amyloliquefaciens subsp. plantarum).